Here is a 160-residue protein sequence, read N- to C-terminus: Ribonuclease H (160 aa).

The 157-residue stretch at 1-157 folds into the RNase H type-1 domain; the sequence is MNIEIYTDGA…CDRLAVEACQ (157 aa). The Mg(2+) site is built by Asp8, Glu49, Asp85, and Asp149.

This sequence belongs to the RNase H family. As to quaternary structure, monomer. Mg(2+) is required as a cofactor.

The protein resides in the cytoplasm. The catalysed reaction is Endonucleolytic cleavage to 5'-phosphomonoester.. In terms of biological role, endonuclease that specifically degrades the RNA of RNA-DNA hybrids. The protein is Ribonuclease H of Treponema denticola (strain ATCC 35405 / DSM 14222 / CIP 103919 / JCM 8153 / KCTC 15104).